A 458-amino-acid polypeptide reads, in one-letter code: Phosphoglucosamine mutase (458 aa).

S102 serves as the catalytic Phosphoserine intermediate. The Mg(2+) site is built by S102, D252, D254, and D256. A Phosphoserine modification is found at S102.

This sequence belongs to the phosphohexose mutase family. It depends on Mg(2+) as a cofactor. Activated by phosphorylation.

It catalyses the reaction alpha-D-glucosamine 1-phosphate = D-glucosamine 6-phosphate. Its function is as follows. Catalyzes the conversion of glucosamine-6-phosphate to glucosamine-1-phosphate. This is Phosphoglucosamine mutase from Anaeromyxobacter dehalogenans (strain 2CP-C).